We begin with the raw amino-acid sequence, 528 residues long: Abrin-d (528 aa).

At Q1 the chain carries Pyrrolidone carboxylic acid. E164 is a catalytic residue. N200 carries N-linked (GlcNAc...) asparagine glycosylation. Disulfide bonds link C247–C269, C286–C305, and C329–C346. One can recognise a Ricin B-type lectin 1 domain in the interval 273-400; the sequence is YEPTVRIGGR…YLMRQGWRTG (128 aa). The 1-alpha repeat unit spans residues 283 to 325; the sequence is DGMCVDVYDDGYHNGNRIIAWKCKDRLEENQLWTLKSDLTIRS. A 1-beta repeat occupies 326–366; it reads NGKCLTTEGYAPGNYVMIYDCTSAVAEATYWEIWDNGTIIN. N361 and N401 each carry an N-linked (GlcNAc...) asparagine glycan. One copy of the 1-gamma repeat lies at 369–401; sequence SALVLSAESSSMGGTLTVQTNEYLMRQGWRTGN. One can recognise a Ricin B-type lectin 2 domain in the interval 403–527; that stretch reads TSPFVTSISG…GKPNQIWLTL (125 aa). The 2-alpha repeat unit spans residues 414–449; it reads SDLCMQAQGSNVWLADCDNNKKEQQWALYTDGSIRS. 2 disulfides stabilise this stretch: C417-C430 and C456-C473. The stretch at 453-492 is one 2-beta repeat; the sequence is TNNCLTSKDHKQGSPIVLMACSNGWASQRWLFKNDGSIYS. Residues 495-528 form a 2-gamma repeat; sequence DDMVMDVKGSDPSLKQIILWPYTGKPNQIWLTLF.

This sequence in the N-terminal section; belongs to the ribosome-inactivating protein family. Type 2 RIP subfamily. Disulfide-linked dimer of A and B chains.

The enzyme catalyses Endohydrolysis of the N-glycosidic bond at one specific adenosine on the 28S rRNA.. Functionally, the A chain is responsible for inhibiting protein synthesis through the catalytic inactivation of 60S ribosomal subunits by removing adenine from position 4,324 of 28S rRNA. The B chain is a galactose-specific lectin that facilitates the binding of abrin to the cell membrane that precedes endocytosis. This Abrus precatorius (Indian licorice) protein is Abrin-d.